Consider the following 540-residue polypeptide: Protein dml-1 (540 aa).

A disordered region spans residues Asn-517 to Asp-540.

This sequence belongs to the misato family.

The protein localises to the mitochondrion. Functionally, involved in the partitioning of the mitochondrial organelle and mitochondrial DNA (mtDNA) inheritance. This chain is Protein dml-1 (dml-1), found in Neurospora crassa (strain ATCC 24698 / 74-OR23-1A / CBS 708.71 / DSM 1257 / FGSC 987).